The sequence spans 343 residues: Armadillo repeat-containing protein 10 (343 aa).

A helical transmembrane segment spans residues 5 to 27; sequence RGAGWVAAGLLLGAGACYCIYRL. Residues 43–83 form a disordered region; that stretch reads SKSAGALEEGTSEGQLCGRSARPQTGGTWESQWSKTSQPED. The residue at position 45 (serine 45) is a Phosphoserine. Glutamate 50 is modified (phosphothreonine). Positions 64-82 are enriched in polar residues; sequence RPQTGGTWESQWSKTSQPE. A Phosphothreonine modification is found at threonine 85. The ARM repeat unit spans residues 138–180; it reads GGIPIVANKINHSNQSIKEKALNALNNLSVNVENQIKIKIYIS.

As to quaternary structure, interacts with the DNA-binding domain of p53/TP53. Expressed in all tissues tested with higher expression in placenta, liver, kidney, heart and brain.

It is found in the endoplasmic reticulum membrane. The protein resides in the mitochondrion outer membrane. Its function is as follows. May play a role in cell survival and cell growth. May suppress the transcriptional activity of p53/TP53. The chain is Armadillo repeat-containing protein 10 (ARMC10) from Homo sapiens (Human).